Here is a 594-residue protein sequence, read N- to C-terminus: Glutamate decarboxylase 1 (594 aa).

Low complexity predominate over residues 1 to 13 (MASSTPSSSATSS). The segment at 1 to 23 (MASSTPSSSATSSNAGADPNTTN) is disordered. Ser78 bears the Phosphoserine mark. 190–192 (QLS) lines the 4-aminobutanoate pocket. Residue Lys405 is modified to N6-(pyridoxal phosphate)lysine. Arg567 is a binding site for 4-aminobutanoate.

Belongs to the group II decarboxylase family. As to quaternary structure, homodimer. Pyridoxal 5'-phosphate serves as cofactor.

It catalyses the reaction L-glutamate + H(+) = 4-aminobutanoate + CO2. Catalyzes the synthesis of the inhibitory neurotransmitter gamma-aminobutyric acid (GABA) with pyridoxal 5'-phosphate as cofactor. This Pan troglodytes (Chimpanzee) protein is Glutamate decarboxylase 1 (GAD1).